The sequence spans 335 residues: NADH-quinone oxidoreductase subunit H (335 aa).

Transmembrane regions (helical) follow at residues V11 to L31, M81 to I101, I114 to G134, V154 to F174, L187 to V207, F238 to F258, Q270 to L290, and W307 to Y327.

The protein belongs to the complex I subunit 1 family. As to quaternary structure, NDH-1 is composed of 13 different subunits. Subunits NuoA, H, J, K, L, M, N constitute the membrane sector of the complex.

It is found in the cell inner membrane. The catalysed reaction is a quinone + NADH + 5 H(+)(in) = a quinol + NAD(+) + 4 H(+)(out). Its function is as follows. NDH-1 shuttles electrons from NADH, via FMN and iron-sulfur (Fe-S) centers, to quinones in the respiratory chain. The immediate electron acceptor for the enzyme in this species is believed to be ubiquinone. Couples the redox reaction to proton translocation (for every two electrons transferred, four hydrogen ions are translocated across the cytoplasmic membrane), and thus conserves the redox energy in a proton gradient. This subunit may bind ubiquinone. The protein is NADH-quinone oxidoreductase subunit H of Pseudomonas entomophila (strain L48).